A 194-amino-acid polypeptide reads, in one-letter code: Crossover junction endodeoxyribonuclease RuvC (194 aa).

Residues Asp-7, Glu-68, and Asp-141 contribute to the active site. Mg(2+) contacts are provided by Asp-7, Glu-68, and Asp-141.

This sequence belongs to the RuvC family. In terms of assembly, homodimer which binds Holliday junction (HJ) DNA. The HJ becomes 2-fold symmetrical on binding to RuvC with unstacked arms; it has a different conformation from HJ DNA in complex with RuvA. In the full resolvosome a probable DNA-RuvA(4)-RuvB(12)-RuvC(2) complex forms which resolves the HJ. The cofactor is Mg(2+).

Its subcellular location is the cytoplasm. It carries out the reaction Endonucleolytic cleavage at a junction such as a reciprocal single-stranded crossover between two homologous DNA duplexes (Holliday junction).. Its function is as follows. The RuvA-RuvB-RuvC complex processes Holliday junction (HJ) DNA during genetic recombination and DNA repair. Endonuclease that resolves HJ intermediates. Cleaves cruciform DNA by making single-stranded nicks across the HJ at symmetrical positions within the homologous arms, yielding a 5'-phosphate and a 3'-hydroxyl group; requires a central core of homology in the junction. The consensus cleavage sequence is 5'-(A/T)TT(C/G)-3'. Cleavage occurs on the 3'-side of the TT dinucleotide at the point of strand exchange. HJ branch migration catalyzed by RuvA-RuvB allows RuvC to scan DNA until it finds its consensus sequence, where it cleaves and resolves the cruciform DNA. The sequence is that of Crossover junction endodeoxyribonuclease RuvC from Mycolicibacterium vanbaalenii (strain DSM 7251 / JCM 13017 / BCRC 16820 / KCTC 9966 / NRRL B-24157 / PYR-1) (Mycobacterium vanbaalenii).